A 305-amino-acid chain; its full sequence is HPr kinase/phosphorylase (305 aa).

Catalysis depends on residues His136 and Lys157. 151 to 158 (GESGIGKS) lines the ATP pocket. Ser158 is a binding site for Mg(2+). Asp175 acts as the Proton acceptor; for phosphorylation activity. Proton donor; for dephosphorylation activity in catalysis. Residues 198–207 (LEVRGLGIID) are important for the catalytic mechanism of both phosphorylation and dephosphorylation. Glu199 serves as a coordination point for Mg(2+). Residue Arg240 is part of the active site. An important for the catalytic mechanism of dephosphorylation region spans residues 261–266 (PIRPGR).

The protein belongs to the HPrK/P family. As to quaternary structure, homohexamer. It depends on Mg(2+) as a cofactor.

It catalyses the reaction [HPr protein]-L-serine + ATP = [HPr protein]-O-phospho-L-serine + ADP + H(+). The catalysed reaction is [HPr protein]-O-phospho-L-serine + phosphate + H(+) = [HPr protein]-L-serine + diphosphate. Catalyzes the ATP- as well as the pyrophosphate-dependent phosphorylation of a specific serine residue in HPr, a phosphocarrier protein of the phosphoenolpyruvate-dependent sugar phosphotransferase system (PTS). HprK/P also catalyzes the pyrophosphate-producing, inorganic phosphate-dependent dephosphorylation (phosphorolysis) of seryl-phosphorylated HPr (P-Ser-HPr). The two antagonistic activities of HprK/P are regulated by several intracellular metabolites, which change their concentration in response to the absence or presence of rapidly metabolisable carbon sources (glucose, fructose, etc.) in the growth medium. Therefore, by controlling the phosphorylation state of HPr, HPrK/P is a sensor enzyme that plays a major role in the regulation of carbon metabolism and sugar transport: it mediates carbon catabolite repression (CCR), and regulates PTS-catalyzed carbohydrate uptake and inducer exclusion. This Clostridium tetani (strain Massachusetts / E88) protein is HPr kinase/phosphorylase.